A 121-amino-acid polypeptide reads, in one-letter code: Protein YxiB (121 aa).

The chain is Protein YxiB (yxiB) from Bacillus subtilis (strain 168).